A 331-amino-acid chain; its full sequence is MKIKATIERIPGGMMLVPLVLGAILNTLAPNTGAYFGGFTKGMISGTVPILAVWFFCIGASINLRATGTVLRKSGTLVLTKIAVAWVVAMGCAMFIPENGIQTGFFAGLSVLAIVSAMDMTNGGLYASLMNQYGTKEESGAFVLMSLESGPLVTMLILGSAGLASFEPHHFVGAVLPFLIGFALGNLDTDLRDFFSKATPVLIPFFGFALGNTINLNVIMDTGLLGIVLGVAVIIITGIPLIIADRVIGGGNGTAGVAASSAAGAAVANPMIIAQINPSFEPVAASATALVAASVIVTAILVPIITALYAKRYGNIPKADVEPQPVESLHH.

10 consecutive transmembrane segments (helical) span residues 10-30 (IPGGMMLVPLVLGAILNTLAP), 42-62 (GMISGTVPILAVWFFCIGASI), 77-97 (LVLTKIAVAWVVAMGCAMFIP), 100-120 (GIQTGFFAGLSVLAIVSAMDM), 141-161 (AFVLMSLESGPLVTMLILGSA), 163-183 (LASFEPHHFVGAVLPFLIGFA), 200-220 (PVLIPFFGFALGNTINLNVIM), 224-244 (LLGIVLGVAVIIITGIPLIIA), 254-274 (TAGVAASSAAGAAVANPMIIA), and 289-309 (ALVAASVIVTAILVPIITALY).

Belongs to the KdgT transporter family.

It localises to the cell inner membrane. The enzyme catalyses 2-dehydro-3-deoxy-D-gluconate(in) + H(+)(in) = 2-dehydro-3-deoxy-D-gluconate(out) + H(+)(out). Its function is as follows. Catalyzes the proton-dependent uptake of 2-keto-3-deoxygluconate (KDG) into the cell. The polypeptide is 2-keto-3-deoxygluconate permease (Enterobacter sp. (strain 638)).